Consider the following 115-residue polypeptide: Large ribosomal subunit protein bL20 (115 aa).

This sequence belongs to the bacterial ribosomal protein bL20 family.

In terms of biological role, binds directly to 23S ribosomal RNA and is necessary for the in vitro assembly process of the 50S ribosomal subunit. It is not involved in the protein synthesizing functions of that subunit. The polypeptide is Large ribosomal subunit protein bL20 (Prochlorococcus marinus (strain MIT 9301)).